The chain runs to 279 residues: DegV domain-containing protein SP_1112 (279 aa).

Residues 4 to 277 (IKIVTDSSVT…ENAWAILIRY (274 aa)) form the DegV domain. Hexadecanoate contacts are provided by Thr62 and Ser94.

Its function is as follows. May bind long-chain fatty acids, such as palmitate, and may play a role in lipid transport or fatty acid metabolism. The chain is DegV domain-containing protein SP_1112 from Streptococcus pneumoniae serotype 4 (strain ATCC BAA-334 / TIGR4).